The primary structure comprises 205 residues: Small ribosomal subunit protein uS4 (205 aa).

The disordered stretch occupies residues 1 to 49 (MSKRQSAKYKLDRRMGENIWGRPKSPVNRREYGPGQHGQRRKGKLSDFG). Residues 94–157 (SRLDAIVFRA…KQLTVVLESV (64 aa)) enclose the S4 RNA-binding domain.

This sequence belongs to the universal ribosomal protein uS4 family. Part of the 30S ribosomal subunit. Contacts protein S5. The interaction surface between S4 and S5 is involved in control of translational fidelity.

Its function is as follows. One of the primary rRNA binding proteins, it binds directly to 16S rRNA where it nucleates assembly of the body of the 30S subunit. With S5 and S12 plays an important role in translational accuracy. This is Small ribosomal subunit protein uS4 from Chelativorans sp. (strain BNC1).